Consider the following 149-residue polypeptide: Large ribosomal subunit protein bL9 (149 aa).

Belongs to the bacterial ribosomal protein bL9 family.

Binds to the 23S rRNA. The polypeptide is Large ribosomal subunit protein bL9 (Fervidobacterium nodosum (strain ATCC 35602 / DSM 5306 / Rt17-B1)).